The chain runs to 72 residues: Metallothionein-like protein type 2 (72 aa).

The protein belongs to the metallothionein superfamily. Type 15 family.

In terms of biological role, metallothioneins have a high content of cysteine residues that bind various heavy metals. This is Metallothionein-like protein type 2 from Solanum lycopersicum (Tomato).